Consider the following 539-residue polypeptide: Chloride channel CLIC-like protein 1 (539 aa).

The N-terminal stretch at 1-18 (MLCRLLLCECLLLITGYA) is a signal peptide. Topologically, residues 19–184 (HDDDWIDPTD…EDYFGVDPYN (166 aa)) are lumenal. Residues 41-61 (KSQVRSGTSEKKEVSPDSSEA) form a disordered region. The chain crosses the membrane as a helical span at residues 185-205 (VFMVLLCLLCLVVLVATELWT). Residues 206-215 (YVRWYTQMKR) lie on the Cytoplasmic side of the membrane. A helical membrane pass occupies residues 216 to 236 (IFIISFLLSLAWNWIYLYKMA). Residues 237 to 329 (FAQHQANIAG…GEFIKALMKE (93 aa)) lie on the Lumenal side of the membrane. A helical membrane pass occupies residues 330 to 350 (IPVLLQIPVLAILALAVLSFC). The Cytoplasmic portion of the chain corresponds to 351–539 (YGAGRSVPML…GTEPVSSPCG (189 aa)). Positions 361-410 (RHFGGPDREPPRALEPDDRRRQKGLDYRLHGGAGDADFSYRGPAGSIEQG) are disordered. A compositionally biased stretch (basic and acidic residues) spans 364-389 (GGPDREPPRALEPDDRRRQKGLDYRL). Serine 429, serine 433, and serine 459 each carry phosphoserine. Residues 444–539 (DTEAQEHPEV…GTEPVSSPCG (96 aa)) are disordered. Over residues 475–485 (STPTEYSQSAK) the composition is skewed to polar residues. Residue threonine 476 is modified to Phosphothreonine. 3 positions are modified to phosphoserine: serine 498, serine 513, and serine 521. Over residues 512 to 521 (CSPPGGCPPS) the composition is skewed to low complexity.

Belongs to the chloride channel MCLC family. In terms of assembly, homomultimers. Interacts with mitochondrial protein PIGBOS1 (via C-terminus); the interaction occurs at the mitochondria-associated endoplasmic reticulum (ER) membrane, a zone of contact between the ER and mitochondrial membranes, but does not appear to play a role in ER-mitochondria tethering and is not affected by ER stress. Interacts with CALR. As to expression, expressed in cerebellum (at protein level).

The protein localises to the endoplasmic reticulum membrane. The enzyme catalyses chloride(in) = chloride(out). It catalyses the reaction bromide(in) = bromide(out). The catalysed reaction is nitrate(in) = nitrate(out). It carries out the reaction fluoride(in) = fluoride(out). With respect to regulation, activated by membrane phosphatidylinositol 4,5-bisphosphate (PI(4,5)P2, PIP2). Inhibited by lumenal Ca(2+). Its function is as follows. Anion-selective channel with Ca(2+)-dependent and voltage-independent gating. Permeable to small monovalent anions with selectivity for bromide &gt; chloride &gt; nitrate &gt; fluoride. Operates in the endoplasmic reticulum (ER) membrane where it mediates chloride efflux to compensate for the loss of positive charges from the ER lumen upon Ca(2+) release. Contributes to the maintenance of ER Ca(2+) pools and activation of unfolded protein response to prevent accumulation of misfolded proteins in the ER lumen. Particularly involved in ER homeostasis mechanisms underlying motor neurons and retinal photoreceptors survival. The polypeptide is Chloride channel CLIC-like protein 1 (Mus musculus (Mouse)).